The following is a 191-amino-acid chain: Putative glutathione-dependent formaldehyde-activating enzyme (191 aa).

The region spanning Phe-20 to Asp-166 is the CENP-V/GFA domain. Positions 27, 29, 48, 50, 53, 95, and 98 each coordinate Zn(2+).

It belongs to the Gfa family. The cofactor is Zn(2+).

It catalyses the reaction S-(hydroxymethyl)glutathione = glutathione + formaldehyde. The protein operates within one-carbon metabolism; formaldehyde degradation; formate from formaldehyde (glutathione route): step 1/3. Its function is as follows. Catalyzes the condensation of formaldehyde and glutathione to S-hydroxymethylglutathione. This is Putative glutathione-dependent formaldehyde-activating enzyme from Aspergillus terreus (strain NIH 2624 / FGSC A1156).